A 177-amino-acid chain; its full sequence is Negative modulator of initiation of replication (177 aa).

It belongs to the SeqA family. As to quaternary structure, homodimer. Polymerizes to form helical filaments.

It is found in the cytoplasm. Its function is as follows. Negative regulator of replication initiation, which contributes to regulation of DNA replication and ensures that replication initiation occurs exactly once per chromosome per cell cycle. Binds to pairs of hemimethylated GATC sequences in the oriC region, thus preventing assembly of replication proteins and re-initiation at newly replicated origins. Repression is relieved when the region becomes fully methylated. In Vibrio cholerae serotype O1 (strain ATCC 39315 / El Tor Inaba N16961), this protein is Negative modulator of initiation of replication.